A 383-amino-acid chain; its full sequence is Adaptive-response sensory kinase SasA (383 aa).

The Histidine kinase domain maps to 152–365 (MVAHELRTPL…CFTFTVPIWQ (214 aa)). His155 bears the Phosphohistidine; by autocatalysis mark.

In terms of assembly, homooligomerizes. Interacts with KaiC. Participates in the KaiABC clock complex, whose core is composed of a KaiC homohexamer, 6 KaiB and up to 6 KaiA dimers. SasA and KaiB(fs) compete to bind to KaiC.

It catalyses the reaction ATP + protein L-histidine = ADP + protein N-phospho-L-histidine.. Functionally, member of the two-component regulatory system SasA/RpaA involved in genome-wide circadian gene expression. One of several clock output pathways. Participates in the Kai clock protein complex, the main circadian regulator in cyanobacteria, via its interaction with KaiC. KaiC enhances the autophosphorylation activity of SasA, which then transfers its phosphate group to RpaA to activate it. In addition to its output function, recruits fold-shifted KaiB (KaiB(fs)) to KaiC to cooperatively form the KaiB(6):KaiC(6) complex (independent of SasA kinase activity). Required for robustness of the circadian rhythm of gene expression and is involved in clock output, also required for adaptation to light/dark cycles. This is Adaptive-response sensory kinase SasA from Parasynechococcus marenigrum (strain WH8102).